We begin with the raw amino-acid sequence, 79 residues long: UPF0181 protein PC1_1931 (79 aa).

The segment at 54–79 (FDEDDDTVNDSDEEHYFDDGEEEDEQ) is disordered.

It belongs to the UPF0181 family.

This chain is UPF0181 protein PC1_1931, found in Pectobacterium carotovorum subsp. carotovorum (strain PC1).